The sequence spans 257 residues: Hydroxyacylglutathione hydrolase (257 aa).

Residues His-54, His-56, Asp-58, His-59, His-113, Asp-137, and His-175 each coordinate Zn(2+).

It belongs to the metallo-beta-lactamase superfamily. Glyoxalase II family. As to quaternary structure, monomer. Requires Zn(2+) as cofactor.

The catalysed reaction is an S-(2-hydroxyacyl)glutathione + H2O = a 2-hydroxy carboxylate + glutathione + H(+). Its pathway is secondary metabolite metabolism; methylglyoxal degradation; (R)-lactate from methylglyoxal: step 2/2. In terms of biological role, thiolesterase that catalyzes the hydrolysis of S-D-lactoyl-glutathione to form glutathione and D-lactic acid. The sequence is that of Hydroxyacylglutathione hydrolase from Nostoc punctiforme (strain ATCC 29133 / PCC 73102).